We begin with the raw amino-acid sequence, 498 residues long: MRINPTNSGFGVSTIGEKNLGRIAQLIGPVLDVVFPLGKMPNNYNALVVKGRDTVDQQINVTCEVQQLLGNNRVRALAMSATDGLTRGMEVIDTGAALSVPVGGATLGRIFNVLGEPVDNLGPVDTRTTSPIHRSAPAFIQLDTKLSIFETGIKVVDLLAPYRRGGKIGLFGGAGVGKTVLIMELINNIAKAHGGVSVFGGVGERTREGNDLYMEMKESGVINEKNIAESKVALVYGQMNEPPGARMRVGLTALTMAEYFRDVNEQDVLLFIDNIFRFVQAGSEVSALLGRMPSAVGYQPTLSTEMGSLQERITSTKEGSITSIQAVYVPADDLTDPAPATTFAHLDATTVLSRGLAAKGIYPAVDPLDSTSTMLQPRIVGEEHYETAQRVKQTLQRYKELQDIIAILGLDELSEEDRLTVARARKIERFLSQPFFVAEVFTGSPGKYVGLTETIRGFQLILSGELDGLPEQAFYLVGNIDEATAKAMNLEKESNLKK.

Gly172–Thr179 is a binding site for ATP.

It belongs to the ATPase alpha/beta chains family. In terms of assembly, F-type ATPases have 2 components, CF(1) - the catalytic core - and CF(0) - the membrane proton channel. CF(1) has five subunits: alpha(3), beta(3), gamma(1), delta(1), epsilon(1). CF(0) has four main subunits: a(1), b(1), b'(1) and c(9-12).

It is found in the plastid. It localises to the chloroplast thylakoid membrane. The catalysed reaction is ATP + H2O + 4 H(+)(in) = ADP + phosphate + 5 H(+)(out). Its function is as follows. Produces ATP from ADP in the presence of a proton gradient across the membrane. The catalytic sites are hosted primarily by the beta subunits. This is ATP synthase subunit beta, chloroplastic from Whiteheadia bifolia (Elephants ears).